The sequence spans 305 residues: Methionyl-tRNA formyltransferase (305 aa).

Residue 111 to 114 (SLLP) coordinates (6S)-5,6,7,8-tetrahydrofolate.

The protein belongs to the Fmt family.

The catalysed reaction is L-methionyl-tRNA(fMet) + (6R)-10-formyltetrahydrofolate = N-formyl-L-methionyl-tRNA(fMet) + (6S)-5,6,7,8-tetrahydrofolate + H(+). Attaches a formyl group to the free amino group of methionyl-tRNA(fMet). The formyl group appears to play a dual role in the initiator identity of N-formylmethionyl-tRNA by promoting its recognition by IF2 and preventing the misappropriation of this tRNA by the elongation apparatus. This Campylobacter jejuni subsp. jejuni serotype O:2 (strain ATCC 700819 / NCTC 11168) protein is Methionyl-tRNA formyltransferase.